Consider the following 204-residue polypeptide: FMN-dependent NADH:quinone oxidoreductase 5 (204 aa).

Serine 10 provides a ligand contact to FMN.

The protein belongs to the azoreductase type 1 family. As to quaternary structure, homodimer. Requires FMN as cofactor.

The catalysed reaction is 2 a quinone + NADH + H(+) = 2 a 1,4-benzosemiquinone + NAD(+). It catalyses the reaction N,N-dimethyl-1,4-phenylenediamine + anthranilate + 2 NAD(+) = 2-(4-dimethylaminophenyl)diazenylbenzoate + 2 NADH + 2 H(+). In terms of biological role, quinone reductase that provides resistance to thiol-specific stress caused by electrophilic quinones. Also exhibits azoreductase activity. Catalyzes the reductive cleavage of the azo bond in aromatic azo compounds to the corresponding amines. In Burkholderia lata (strain ATCC 17760 / DSM 23089 / LMG 22485 / NCIMB 9086 / R18194 / 383), this protein is FMN-dependent NADH:quinone oxidoreductase 5.